A 699-amino-acid polypeptide reads, in one-letter code: SPS-sensor serine protease component SSY5 (699 aa).

Disordered stretches follow at residues 1 to 113 (MVRF…LQGF) and 128 to 158 (PVKEEESQDTQNTLDVSSSTSSTLATSENAR). Residues 1-381 (MVRFFGLNKK…YCVKDYIKKA (381 aa)) constitute a propeptide that is removed on maturation. Residues 24 to 38 (NEQNAAETSSSNVSG) are compositionally biased toward polar residues. The segment covering 39–51 (NEERIDPNSHDTN) has biased composition (basic and acidic residues). Residues 61–78 (STTFGSSIQSSSIFSRGR) are compositionally biased toward low complexity. Residues 83-93 (TGASSSMATSE) are compositionally biased toward polar residues. 2 stretches are compositionally biased toward low complexity: residues 97–109 (HSSGHSGSKNSKN) and 144–154 (SSSTSSTLATS). Residues 459–699 (FAITCAHVVL…QWDIDPQLDG (241 aa)) are serine protease. Catalysis depends on charge relay system residues His-465, Asp-545, and Ser-640.

Belongs to the peptidase S64 family. Component of the plasma membrane SPS (SSY1-PTR3-SSY5) amino acid sensor complex. Post-translationally, the propeptide is autoproteolytically cleaved from the catalytic domain but remains associated, forming an inactive protease complex. This processing occurs even in the absence of signaling.

It is found in the cell membrane. Its function is as follows. Protease component of the SPS-sensor system, which regulates the expression of several amino acid-metabolizing enzymes and amino acid- and peptide-permeases in response to extracellular amino acid levels by controlling the activity of two transcription factors, STP1 and STP2. Catalyzes the activation of these transcription factors, which are synthesized as latent cytoplasmic precursors, by proteolytic removal of an N-terminal inhibitory domain containing cytoplasmic retention motifs. SSY5 binds as an inactive protease complex to STP1. In response to extracellular amino acids and dependent on the other SPS-sensor components, the inhibitory propeptide is induced to dissociate, and thereby enables the catalytic domain to process STP1. This is SPS-sensor serine protease component SSY5 (SSY5) from Saccharomyces cerevisiae (strain ATCC 204508 / S288c) (Baker's yeast).